Here is a 345-residue protein sequence, read N- to C-terminus: Small ribosomal subunit biogenesis GTPase RsgA (345 aa).

A disordered region spans residues 1–36 (MSKNKLSKGQERRVQANHQRRLQQRERGAAHWDDQP). Residues 23-34 (QQRERGAAHWDD) are compositionally biased toward basic and acidic residues. The CP-type G domain occupies 103–273 (RSVLTRPDVY…LIDSPGVREL (171 aa)). Residues 159–162 (NKID) and 213–221 (GQSGVGKSS) each bind GTP. 4 residues coordinate Zn(2+): Cys-297, Cys-302, His-304, and Cys-310.

Belongs to the TRAFAC class YlqF/YawG GTPase family. RsgA subfamily. Monomer. Associates with 30S ribosomal subunit, binds 16S rRNA. The cofactor is Zn(2+).

It is found in the cytoplasm. Its function is as follows. One of several proteins that assist in the late maturation steps of the functional core of the 30S ribosomal subunit. Helps release RbfA from mature subunits. May play a role in the assembly of ribosomal proteins into the subunit. Circularly permuted GTPase that catalyzes slow GTP hydrolysis, GTPase activity is stimulated by the 30S ribosomal subunit. The chain is Small ribosomal subunit biogenesis GTPase RsgA from Sodalis glossinidius (strain morsitans).